Here is a 158-residue protein sequence, read N- to C-terminus: Endoribonuclease YbeY (158 aa).

His118, His122, and His128 together coordinate Zn(2+).

This sequence belongs to the endoribonuclease YbeY family. It depends on Zn(2+) as a cofactor.

It is found in the cytoplasm. Functionally, single strand-specific metallo-endoribonuclease involved in late-stage 70S ribosome quality control and in maturation of the 3' terminus of the 16S rRNA. This is Endoribonuclease YbeY from Alteromonas mediterranea (strain DSM 17117 / CIP 110805 / LMG 28347 / Deep ecotype).